Reading from the N-terminus, the 589-residue chain is Chromodomain Y-like protein (589 aa).

The segment covering 1–10 (MGLGSSQPST) has biased composition (polar residues). Residues 1–57 (MGLGSSQPSTKEAEPCTLQEKEEHPVDDTRQQNNAVPATVSDPDQVSPAVQDAETQV) are disordered. Residues 11-30 (KEAEPCTLQEKEEHPVDDTR) are compositionally biased toward basic and acidic residues. The 61-residue stretch at 55 to 115 (TQVESIVDKR…RHNERQKEGT (61 aa)) folds into the Chromo domain. Residues 55-300 (TQVESIVDKR…TIQTSVTGVT (246 aa)) form an interaction with EZH2 region. Ser82 bears the Phosphoserine mark. The interval 110–155 (RQKEGTLARANRASPSNARKQISRSTHSALSKTNPKALVVGKDHES) is disordered. Residues 117–128 (ARANRASPSNAR) are compositionally biased toward low complexity. An N6,N6,N6-trimethyllysine; by EHMT2; alternate modification is found at Lys129. Lys129 is modified (N6,N6-dimethyllysine; by EHMT2; alternate). At Lys129 the chain carries N6-methyllysine; by EHMT2; alternate. Positions 132–143 (SRSTHSALSKTN) are enriched in polar residues. 3 positions are modified to phosphoserine: Ser164, Ser195, and Ser210. The segment at 202 to 224 (SIDGFHGESPEKLDQGAEDTVTP) is disordered. A compositionally biased stretch (basic and acidic residues) spans 206 to 216 (FHGESPEKLDQ). The segment at 353 to 585 (SENNSLNPEV…DSMLKYLQRK (233 aa)) is acetyl-CoA-binding domain.

In terms of assembly, forms multimers and multimerization is required for stable binding to chromatin. Interacts with HDAC1 and HDAC2 via its C-terminal acetyl-CoA-binding domain. Interacts with EZH2, EED, SUZ12, REST, EHMT1 and EHMT2. Part of a complex containing at least CDYL, REST, WIZ, SETB1, EHMT1 and EHMT2. Part of a complex containing at least CDYL, MIER1, MIER2, HDAC1 and HDAC2. Interacts with CHAF1A and CHAF1B; bridging the CAF-1 complex to the MCM2-7 (MCM) complex. Interacts with MCM3 and MCM5; bridging the CAF-1 complex to the MCM2-7 (MCM) complex. Recruited to Xist RNA-coated X chromosome. Interacts with EHMT2 and PRDM9; interaction only takes place when PRDM9 is bound to hotspot DNA. In terms of tissue distribution, expressed in the brain, with expression in the hippocampal dentate gyrus, CA1, striatum and cortex (at protein level). Expressed in the prelimbic cortex.

The protein resides in the nucleus. It is found in the chromosome. It carries out the reaction 3-hydroxybutanoyl-CoA = (2E)-butenoyl-CoA + H2O. In terms of biological role, chromatin reader protein that recognizes and binds histone H3 trimethylated at 'Lys-9', dimethylated at 'Lys-27' and trimethylated at 'Lys-27' (H3K9me3, H3K27me2 and H3K27me3, respectively). Part of multimeric repressive chromatin complexes, where it is required for transmission and restoration of repressive histone marks, thereby preserving the epigenetic landscape. Required for chromatin targeting and maximal enzymatic activity of Polycomb repressive complex 2 (PRC2); acts as a positive regulator of PRC2 activity by bridging the pre-existing histone H3K27me3 and newly recruited PRC2 on neighboring nucleosomes. Acts as a corepressor for REST by facilitating histone-lysine N-methyltransferase EHMT2 recruitment and H3K9 dimethylation at REST target genes for repression. Involved in X chromosome inactivation in females: recruited to Xist RNA-coated X chromosome and facilitates propagation of H3K9me2 by anchoring EHMT2. Promotes EZH2 accumulation and H3K27me3 methylation at DNA double strand breaks (DSBs), thereby facilitating transcriptional repression at sites of DNA damage and homology-directed repair of DSBs. Required for neuronal migration during brain development by repressing expression of RHOA. By repressing the expression of SCN8A, contributes to the inhibition of intrinsic neuronal excitability and epileptogenesis. In addition to acting as a chromatin reader, acts as a hydro-lyase. Shows crotonyl-coA hydratase activity by mediating the conversion of crotonyl-CoA ((2E)-butenoyl-CoA) to beta-hydroxybutyryl-CoA (3-hydroxybutanoyl-CoA), thereby acting as a negative regulator of histone crotonylation. Histone crotonylation is required during spermatogenesis; down-regulation of histone crotonylation by CDYL regulates the reactivation of sex chromosome-linked genes in round spermatids and histone replacement in elongating spermatids. By regulating histone crotonylation and trimethylation of H3K27, may be involved in stress-induced depression-like behaviors, possibly by regulating VGF expression. Displays acetyltransferase activity toward tubulin in vitro; such activity is however unsure in vivo and additional evidences would be required to confirm this result. Its function is as follows. Not able to recognize and bind histone H3K9me3, histone H3K27me2 and histone H3K27me3, due to the presence of a N-terminal extension that inactivates the chromo domain. The polypeptide is Chromodomain Y-like protein (Rattus norvegicus (Rat)).